Reading from the N-terminus, the 291-residue chain is Phytanoyl-CoA dioxygenase domain-containing protein 1 (291 aa).

2-oxoglutarate-binding positions include Lys102, Met141, 156–158, and Trp174; that span reads HQD. 2 residues coordinate Fe cation: His156 and Asp158. His246 provides a ligand contact to Fe cation. 2-oxoglutarate-binding residues include Ser248 and Arg257.

This sequence belongs to the PhyH family. PHYHD1 subfamily. It depends on Fe cation as a cofactor.

In terms of biological role, 2-oxoglutarate(2OG)-dependent dioxygenase that catalyzes the conversion of 2-oxoglutarate to succinate and CO(2) in an iron-dependent manner. However, does not couple 2OG turnover to the hydroxylation of acyl-coenzyme A derivatives, implying that it is not directly involved in phytanoyl coenzyme-A metabolism. Does not show detectable activity towards fatty acid CoA thioesters. The chain is Phytanoyl-CoA dioxygenase domain-containing protein 1 (phyhd1) from Danio rerio (Zebrafish).